Consider the following 593-residue polypeptide: Pyruvate decarboxylase 1 (593 aa).

Polar residues predominate over residues 1 to 19; it reads METETETPNGSTPCPTSAP. Residues 1–20 are disordered; sequence METETETPNGSTPCPTSAPS. Positions 55 and 142 each coordinate substrate. Residues 420 to 502 are thiamine pyrophosphate binding; it reads DSWFNCQKLR…FLINNGGYTI (83 aa). The Mg(2+) site is built by aspartate 470, asparagine 497, and glycine 499. Glutamate 503 contributes to the substrate binding site.

The protein belongs to the TPP enzyme family. As to quaternary structure, homotetramer. Requires a metal cation as cofactor. It depends on thiamine diphosphate as a cofactor.

It carries out the reaction a 2-oxocarboxylate + H(+) = an aldehyde + CO2. The polypeptide is Pyruvate decarboxylase 1 (PDC1) (Pisum sativum (Garden pea)).